Consider the following 44-residue polypeptide: Photosystem I reaction center subunit IX (44 aa).

The chain crosses the membrane as a helical span at residues 7-27 (YLSTAPVLATLWFGSLAGLLI).

It belongs to the PsaJ family.

It localises to the plastid. It is found in the chloroplast thylakoid membrane. Its function is as follows. May help in the organization of the PsaE and PsaF subunits. In Cycas taitungensis (Prince sago), this protein is Photosystem I reaction center subunit IX.